Here is a 321-residue protein sequence, read N- to C-terminus: Ribose-phosphate pyrophosphokinase C (321 aa).

Mg(2+) is bound by residues aspartate 132 and aspartate 147. The segment at 214–229 (SGKVAIIIGSIADTCE) is binding of phosphoribosylpyrophosphate.

It belongs to the ribose-phosphate pyrophosphokinase family. The cofactor is Mg(2+).

It localises to the cytoplasm. The catalysed reaction is D-ribose 5-phosphate + ATP = 5-phospho-alpha-D-ribose 1-diphosphate + AMP + H(+). It functions in the pathway metabolic intermediate biosynthesis; 5-phospho-alpha-D-ribose 1-diphosphate biosynthesis; 5-phospho-alpha-D-ribose 1-diphosphate from D-ribose 5-phosphate (route I): step 1/1. The protein is Ribose-phosphate pyrophosphokinase C (prsC) of Dictyostelium discoideum (Social amoeba).